The sequence spans 388 residues: Chorismate synthase (388 aa).

Positions 39 and 45 each coordinate NADP(+). FMN-binding positions include 130-132, 251-252, glycine 296, 311-315, and arginine 337; these read RSS, NA, and KPIPT.

It belongs to the chorismate synthase family. As to quaternary structure, homotetramer. FMNH2 is required as a cofactor.

The catalysed reaction is 5-O-(1-carboxyvinyl)-3-phosphoshikimate = chorismate + phosphate. It participates in metabolic intermediate biosynthesis; chorismate biosynthesis; chorismate from D-erythrose 4-phosphate and phosphoenolpyruvate: step 7/7. Catalyzes the anti-1,4-elimination of the C-3 phosphate and the C-6 proR hydrogen from 5-enolpyruvylshikimate-3-phosphate (EPSP) to yield chorismate, which is the branch point compound that serves as the starting substrate for the three terminal pathways of aromatic amino acid biosynthesis. This reaction introduces a second double bond into the aromatic ring system. The polypeptide is Chorismate synthase (Streptococcus pyogenes serotype M2 (strain MGAS10270)).